We begin with the raw amino-acid sequence, 359 residues long: S-adenosylmethionine-dependent nucleotide dehydratase RSAD2 (359 aa).

Residues 43–67 (QTPARKISRPESRTSKQKEGSRAPF) are disordered. Residues 50-63 (SRPESRTSKQKEGS) are compositionally biased toward basic and acidic residues. In terms of domain architecture, Radical SAM core spans 67-287 (FTTPSSVNYH…LERHQSIQCL (221 aa)). [4Fe-4S] cluster-binding residues include C81, C85, and C88.

The protein belongs to the radical SAM superfamily. RSAD2 family. The cofactor is [4Fe-4S] cluster.

The protein localises to the endoplasmic reticulum membrane. Interferon-inducible iron-sulfur (4FE-4S) cluster-binding antiviral protein which plays a major role in the cell antiviral state induced by type I and type II interferon. The protein is S-adenosylmethionine-dependent nucleotide dehydratase RSAD2 of Danio rerio (Zebrafish).